The chain runs to 179 residues: Translationally-controlled tumor protein homolog (179 aa).

In terms of domain architecture, TCTP spans 1–179 (MIIYKDIISG…WKHGLEEMKV (179 aa)).

This sequence belongs to the TCTP family.

It is found in the cytoplasm. Its subcellular location is the cytoskeleton. Functionally, involved in protein synthesis. Involved in microtubule stabilization. The polypeptide is Translationally-controlled tumor protein homolog (Aspergillus fumigatus (strain ATCC MYA-4609 / CBS 101355 / FGSC A1100 / Af293) (Neosartorya fumigata)).